The primary structure comprises 458 residues: Homogentisate 1,2-dioxygenase (458 aa).

Residue His308 is the Proton acceptor of the active site. His351 and Glu357 together coordinate Fe cation. Tyr366 and His387 together coordinate homogentisate. His387 is a Fe cation binding site.

This sequence belongs to the homogentisate dioxygenase family. In terms of assembly, hexamer; dimer of trimers. The cofactor is Fe cation.

The catalysed reaction is homogentisate + O2 = 4-maleylacetoacetate + H(+). The protein operates within amino-acid degradation; L-phenylalanine degradation; acetoacetate and fumarate from L-phenylalanine: step 4/6. Functionally, involved in the catabolism of homogentisate (2,5-dihydroxyphenylacetate or 2,5-OH-PhAc), a central intermediate in the degradation of phenylalanine and tyrosine. Catalyzes the oxidative ring cleavage of the aromatic ring of homogentisate to yield maleylacetoacetate. The protein is Homogentisate 1,2-dioxygenase of Xanthomonas axonopodis pv. citri (strain 306).